The primary structure comprises 1035 residues: Kinesin-like protein KIN-4A (1035 aa).

The Kinesin motor domain occupies 10–369 (CVKVAVHVRP…LKYANRARNI (360 aa)). 89–96 (GQTGSGKT) is an ATP binding site. 2 coiled-coil regions span residues 380–437 (VADE…LRNH) and 498–702 (MLQD…RKSS). 3 disordered regions span residues 697–720 (EARKSSGRDNSGMNGTSPGSHMTE), 766–787 (VMSGAASPPRGKNGNSRANTLS), and 882–928 (HSES…PLSP). Composition is skewed to polar residues over residues 704 to 716 (RDNSGMNGTSPGS) and 778 to 787 (NGNSRANTLS). A coiled-coil region spans residues 850 to 904 (NVAADARCQVREKEMEIKEMKEQMTELVTILRHSESRRRETEKQLKQREQAAVTA). The span at 882–898 (HSESRRRETEKQLKQRE) shows a compositional bias: basic and acidic residues. Positions 902-926 (VTATTSPGNGNGSVKHSADDSNTPL) are enriched in polar residues. The Nuclear localization signal motif lies at 971-987 (KKVSIAGQSGKLWRWKR). Residues 1014 to 1035 (DETMTRTRPRPQLLPHRPQRVM) form a disordered region.

The protein belongs to the TRAFAC class myosin-kinesin ATPase superfamily. Kinesin family. KIN-4 subfamily. As to quaternary structure, homodimer. Expressed in young tissues with cell divisions, including initiating adventitious roots, primary root tips, flower primordia, intercalary meristems, sub-epidermal regions of young culms and panicles.

Its subcellular location is the nucleus. The protein localises to the cytoplasm. The protein resides in the cytoskeleton. With respect to regulation, may be regulated by cyclin-dependent kinase A. Microtubule-dependent motor protein involved in the control of the oriented deposition of cellulose microfibrils. Involved in wall biogenesis and modification, and contributes to cell-cycle progression and cell division. Acts as a transcriptional activator in gibberellic acid (GA) biosynthesis pathway. Binds specifically to the DNA sequence 5'-ACCAACTTGAA-3' of the ent-kaurene oxidase 2 (CYP701A6 or OsKO2) promoter. May regulate CYP701A6 gene expression and mediates cell elongation by regulating the GA biosynthesis pathway. The chain is Kinesin-like protein KIN-4A from Oryza sativa subsp. japonica (Rice).